The primary structure comprises 414 residues: Isocitrate dehydrogenase [NADP] cytoplasmic (414 aa).

Residue Ser2 is modified to N-acetylserine. Tyr42 bears the Phosphotyrosine mark. NADP(+) is bound at residue 75 to 77; it reads TIT. Thr77 contacts substrate. N6-acetyllysine is present on Lys81. Residue Arg82 coordinates NADP(+). Substrate is bound by residues 94-100 and Arg109; that span reads SPNGTIR. An N6-succinyllysine modification is found at Lys126. Arg132 and Lys212 together coordinate substrate. N6-acetyllysine occurs at positions 224 and 233. Mn(2+) is bound at residue Asp252. Lys260 contributes to the NADP(+) binding site. Positions 275 and 279 each coordinate Mn(2+). 310–315 provides a ligand contact to NADP(+); it reads GTVTRH. N6-acetyllysine is present on Lys321. Residue Asn328 coordinates NADP(+). Residue Ser389 is modified to Phosphoserine. At Lys400 the chain carries N6-succinyllysine.

Belongs to the isocitrate and isopropylmalate dehydrogenases family. Homodimer. It depends on Mg(2+) as a cofactor. Requires Mn(2+) as cofactor. Acetylation at Lys-374 dramatically reduces catalytic activity. Expressed preferentially in corneal epithelium. Constitute approximately 13% of the total soluble bovine corneal epithelial proteins.

Its subcellular location is the cytoplasm. The protein localises to the cytosol. The enzyme catalyses D-threo-isocitrate + NADP(+) = 2-oxoglutarate + CO2 + NADPH. Its function is as follows. Catalyzes the NADP(+)-dependent oxidative decarboxylation of isocitrate (D-threo-isocitrate) to 2-ketoglutarate (2-oxoglutarate), which is required by other enzymes such as the phytanoyl-CoA dioxygenase. Plays a critical role in the generation of NADPH, an important cofactor in many biosynthesis pathways. May act as a corneal epithelial crystallin and may be involved in maintaining corneal epithelial transparency. This Bos taurus (Bovine) protein is Isocitrate dehydrogenase [NADP] cytoplasmic (IDH1).